We begin with the raw amino-acid sequence, 430 residues long: GTPase Obg (430 aa).

An Obg domain is found at 1–158 (MFVDQVKISL…LEVTLELKLL (158 aa)). Residues 118–145 (RGGRGGRGNSRFATPRNPAPDFSENGEP) are disordered. Residues 159–329 (ADVGLVGFPS…LLYQIADKLE (171 aa)) enclose the OBG-type G domain. GTP-binding positions include 165-172 (GFPSVGKS), 190-194 (FTTIK), 212-215 (DLPG), 282-285 (NKMD), and 310-312 (STI). Mg(2+)-binding residues include Ser-172 and Thr-192. The region spanning 352–430 (KHTPSADKFT…ILGGEFEFVE (79 aa)) is the OCT domain.

Belongs to the TRAFAC class OBG-HflX-like GTPase superfamily. OBG GTPase family. Monomer. It depends on Mg(2+) as a cofactor.

It localises to the cytoplasm. Functionally, an essential GTPase which binds GTP, GDP and possibly (p)ppGpp with moderate affinity, with high nucleotide exchange rates and a fairly low GTP hydrolysis rate. Plays a role in control of the cell cycle, stress response, ribosome biogenesis and in those bacteria that undergo differentiation, in morphogenesis control. This Staphylococcus epidermidis (strain ATCC 12228 / FDA PCI 1200) protein is GTPase Obg.